Reading from the N-terminus, the 277-residue chain is NH(3)-dependent NAD(+) synthetase (277 aa).

46 to 53 (GISGGQDS) contributes to the ATP binding site. Mg(2+) is bound at residue aspartate 52. Residue arginine 142 participates in deamido-NAD(+) binding. Threonine 162 serves as a coordination point for ATP. Position 167 (glutamate 167) interacts with Mg(2+). Residues lysine 175 and aspartate 182 each contribute to the deamido-NAD(+) site. Residues lysine 191 and threonine 213 each coordinate ATP. 263-264 (HK) serves as a coordination point for deamido-NAD(+).

It belongs to the NAD synthetase family. In terms of assembly, homodimer.

It carries out the reaction deamido-NAD(+) + NH4(+) + ATP = AMP + diphosphate + NAD(+) + H(+). It functions in the pathway cofactor biosynthesis; NAD(+) biosynthesis; NAD(+) from deamido-NAD(+) (ammonia route): step 1/1. In terms of biological role, catalyzes the ATP-dependent amidation of deamido-NAD to form NAD. Uses ammonia as a nitrogen source. This Corynebacterium glutamicum (strain ATCC 13032 / DSM 20300 / JCM 1318 / BCRC 11384 / CCUG 27702 / LMG 3730 / NBRC 12168 / NCIMB 10025 / NRRL B-2784 / 534) protein is NH(3)-dependent NAD(+) synthetase.